Reading from the N-terminus, the 1700-residue chain is Leucine-rich repeat-containing protein 37A2 (1700 aa).

The first 35 residues, 1-35, serve as a signal peptide directing secretion; sequence MSSAQCPALVCVMSRLRFWGPWPLLMWQLLWLLVK. Topologically, residues 36–1582 are extracellular; the sequence is EAQPLEWVKD…VPGYGYTDKL (1547 aa). Over residues 54–65 the composition is skewed to polar residues; that stretch reads LGPPDSWSSHSS. Disordered regions lie at residues 54 to 104, 130 to 156, 169 to 534, 559 to 580, 619 to 642, and 729 to 752; these read LGPP…ESTE, QQDL…DPAQ, QLST…AQPP, TEVE…KVVP, PEPT…KHPE, and TKPT…PDLG. An LRR 1 repeat occupies 137-160; that stretch reads LSPQERLPVSPKKLKKDPAQRWSL. 2 stretches are compositionally biased toward polar residues: residues 169 to 189 and 223 to 237; these read QLST…STDT and ETQN…QSSS. LRR repeat units follow at residues 230 to 253 and 267 to 290; these read LEDI…LEEE and ESSM…EDQA. A compositionally biased stretch (low complexity) spans 238 to 249; that stretch reads LQQEAPAQLPQL. N-linked (GlcNAc...) asparagine glycosylation occurs at Asn296. Positions 307–326 are enriched in polar residues; the sequence is TITSEPTNETESSQAQQETP. Residues 358-368 show a composition bias toward low complexity; that stretch reads SEQQQPVQPSE. The span at 433 to 446 shows a compositional bias: polar residues; sequence LVHQEATTRLSGSG. Residues 482-493 show a composition bias toward low complexity; the sequence is SPEPINNENPSP. The span at 729 to 749 shows a compositional bias: low complexity; sequence TKPTTEVKPSPTTEETSTQPP. LRR repeat units lie at residues 864–887, 888–911, 912–935, 937–959, 963–987, and 1002–1027; these read NGTF…VWKA, YSWT…SFEG, LLSL…TFEP, PFLK…TFQA, MQFL…LFKL, and LTTL…MACC. N-linked (GlcNAc...) asparagine glycosylation is present at Asn1079. The stretch at 1124–1146 is one LRR 10 repeat; that stretch reads LPYFSAVNLDVKSLLLPFIKLPT. 2 stretches are compositionally biased toward basic and acidic residues: residues 1182–1191 and 1201–1216; these read VGRQSIRREQ and AEEK…EVEQ. 2 disordered regions span residues 1182-1227 and 1309-1328; these read VGRQ…EKLA and KTRS…PKVR. A helical transmembrane segment spans residues 1583–1603; sequence ILALIVTGILTILIILFCLIV. Topologically, residues 1604-1700 are cytoplasmic; sequence ICCHRRSLQE…TEEEESEALP (97 aa). Basic and acidic residues predominate over residues 1675–1685; it reads NEDKILNRDPG. Residues 1675-1700 are disordered; that stretch reads NEDKILNRDPGDSEAPTEEEESEALP. Positions 1689–1700 are enriched in acidic residues; it reads APTEEEESEALP.

Belongs to the LRRC37A family.

It localises to the membrane. This chain is Leucine-rich repeat-containing protein 37A2 (LRRC37A2), found in Homo sapiens (Human).